The chain runs to 148 residues: Secretory phospholipase A2 (148 aa).

The first 23 residues, 1–23 (MKLSVLLALGASSLAAAAPAATA), serve as a signal peptide directing secretion. The N-linked (GlcNAc...) asparagine glycan is linked to Asn-61. A disulfide bond links Cys-62 and Cys-78. His-81 is an active-site residue. Asp-82 is a Ca(2+) binding site.

Belongs to the phospholipase A2 family. The cofactor is Ca(2+).

The protein localises to the secreted. The catalysed reaction is a 1,2-diacyl-sn-glycero-3-phosphocholine + H2O = a 1-acyl-sn-glycero-3-phosphocholine + a fatty acid + H(+). Secretory phospholipase that catalyzes the calcium-dependent hydrolysis of the 2-acyl groups in 3-sn-phosphoglycerides. Increases the ability to utilize host-derived nutrients and lipids, and promotes lipid dropplets accumulation. Plays a role in virulence. In Arthroderma benhamiae (strain ATCC MYA-4681 / CBS 112371) (Trichophyton mentagrophytes), this protein is Secretory phospholipase A2.